We begin with the raw amino-acid sequence, 331 residues long: Meiotically up-regulated gene 172 protein (331 aa).

Positions 72–166 (IKNNEYEKQR…KGNYGLVKAR (95 aa)) form a coiled coil.

This sequence belongs to the ADIP family.

It is found in the cytoplasm. Functionally, has a role in meiosis. The chain is Meiotically up-regulated gene 172 protein (mug172) from Schizosaccharomyces pombe (strain 972 / ATCC 24843) (Fission yeast).